The chain runs to 513 residues: Flagellin A (513 aa).

It belongs to the bacterial flagellin family. In terms of assembly, heteromer of FlaA and FlaB. FlaB is located proximal to the hook while the remainder of the filament is composed of the predominant FlaA.

It is found in the secreted. Its subcellular location is the bacterial flagellum. Flagellin is the subunit protein which polymerizes to form the filaments of bacterial flagella. Important for motility and virulence. The polypeptide is Flagellin A (flaA) (Helicobacter felis (strain ATCC 49179 / CCUG 28539 / NCTC 12436 / CS1)).